A 1679-amino-acid polypeptide reads, in one-letter code: Probable myosin heavy chain ECU04_1000 (1679 aa).

The span at 1–14 (MEGTTNKDIGSGSS) shows a compositional bias: polar residues. The interval 1–22 (MEGTTNKDIGSGSSRPGGEVSV) is disordered. Residues 31 to 79 (MEKKWVWAPSSKEAYVCGFVVKEEGDVLEIDCRGVIVRHKSCEVFRMNP) form the Myosin N-terminal SH3-like domain. One can recognise a Myosin motor domain in the interval 83–754 (DMVDDLAELS…VLADIEDMRD (672 aa)). Residue 176-183 (GESGAGKT) participates in ATP binding. Residues 624–646 (LASLMSELRRTNPHFVRCIIPNL) are actin-binding. Positions 823 to 1644 (GEMKEKEAMI…SKMLEMKKKL (822 aa)) form a coiled coil.

It belongs to the TRAFAC class myosin-kinesin ATPase superfamily. Myosin family.

Its function is as follows. Cellular myosin that appears to play a role in cytokinesis, cell shape, and specialized functions such as secretion and capping. This chain is Probable myosin heavy chain ECU04_1000, found in Encephalitozoon cuniculi (strain GB-M1) (Microsporidian parasite).